Reading from the N-terminus, the 525-residue chain is GMP synthase [glutamine-hydrolyzing] (525 aa).

A Glutamine amidotransferase type-1 domain is found at 16-205 (PVLVVDFGAQ…LHDFAGLGAQ (190 aa)). C93 (nucleophile) is an active-site residue. Residues H179 and E181 contribute to the active site. The GMPS ATP-PPase domain occupies 206-399 (WTPANIANAL…LGLPEEIVAR (194 aa)). 233-239 (SGGVDSA) contributes to the ATP binding site.

In terms of assembly, homodimer.

The enzyme catalyses XMP + L-glutamine + ATP + H2O = GMP + L-glutamate + AMP + diphosphate + 2 H(+). It functions in the pathway purine metabolism; GMP biosynthesis; GMP from XMP (L-Gln route): step 1/1. Its function is as follows. Catalyzes the synthesis of GMP from XMP. This chain is GMP synthase [glutamine-hydrolyzing] (guaA), found in Mycobacterium tuberculosis (strain CDC 1551 / Oshkosh).